Reading from the N-terminus, the 360-residue chain is Phospho-N-acetylmuramoyl-pentapeptide-transferase (360 aa).

Residues 1-25 lie on the Periplasmic side of the membrane; sequence MLVWLAEHLVKYYSGFNVFSYLTFR. A helical membrane pass occupies residues 26 to 46; the sequence is AIVSLLTALFISLWMGPRMIA. Over 47–71 the chain is Cytoplasmic; sequence RLQKLSFGQVVRNDGPESHFSKRGT. Residues 72 to 92 form a helical membrane-spanning segment; it reads PTMGGIMILTAIVISVLLWAY. Residue Pro93 is a topological domain, periplasmic. A helical membrane pass occupies residues 94–114; it reads SNPYVWCVLVVLIGYGIIGFV. Topologically, residues 115–131 are cytoplasmic; that stretch reads DDYRKVVRKDTKGLIAR. A helical membrane pass occupies residues 132–152; it reads WKYFWMSVIALGVAFALYLVG. Topologically, residues 153–167 are periplasmic; it reads KDTPVTQLVVPFFKD. Residues 168–188 form a helical membrane-spanning segment; the sequence is VMPQLGLFYILLSYFVIVGTG. The Cytoplasmic segment spans residues 189–198; sequence NAVNLTDGLD. Residues 199–219 traverse the membrane as a helical segment; the sequence is GLAIMPTVFVAAGFALVAWAT. The Periplasmic segment spans residues 220-235; the sequence is GNMNFANYLHIPYLRH. Residues 236 to 256 traverse the membrane as a helical segment; sequence AGELVIVCTAIVGAGLGFLWF. The Cytoplasmic segment spans residues 257 to 262; it reads NTYPAQ. The chain crosses the membrane as a helical span at residues 263–283; the sequence is VFMGDVGSLALGGALGIIAVL. Residues 284–287 are Periplasmic-facing; it reads LRQE. Residues 288 to 308 form a helical membrane-spanning segment; that stretch reads FLLVIMGGVFVVETLSVILQV. The Cytoplasmic portion of the chain corresponds to 309–337; that stretch reads GSFKLRGQRIFRMAPIHHHYELKGWPEPR. Residues 338–358 form a helical membrane-spanning segment; sequence VIVRFWIISLMLVLIGLATLK. Over 359-360 the chain is Periplasmic; the sequence is VR.

Belongs to the glycosyltransferase 4 family. MraY subfamily. Requires Mg(2+) as cofactor.

It is found in the cell inner membrane. It carries out the reaction UDP-N-acetyl-alpha-D-muramoyl-L-alanyl-gamma-D-glutamyl-meso-2,6-diaminopimeloyl-D-alanyl-D-alanine + di-trans,octa-cis-undecaprenyl phosphate = di-trans,octa-cis-undecaprenyl diphospho-N-acetyl-alpha-D-muramoyl-L-alanyl-D-glutamyl-meso-2,6-diaminopimeloyl-D-alanyl-D-alanine + UMP. The protein operates within cell wall biogenesis; peptidoglycan biosynthesis. Functionally, catalyzes the initial step of the lipid cycle reactions in the biosynthesis of the cell wall peptidoglycan: transfers peptidoglycan precursor phospho-MurNAc-pentapeptide from UDP-MurNAc-pentapeptide onto the lipid carrier undecaprenyl phosphate, yielding undecaprenyl-pyrophosphoryl-MurNAc-pentapeptide, known as lipid I. This Salmonella paratyphi C (strain RKS4594) protein is Phospho-N-acetylmuramoyl-pentapeptide-transferase.